A 75-amino-acid chain; its full sequence is Conotoxin Im23.5 (75 aa).

Residues 1–23 (MKFFTCLLLLLVVLTVVFDNVDA) form the signal peptide. 3 cysteine pairs are disulfide-bonded: C24–C28, C37–C40, and C41–C43. The propeptide occupies 24 to 50 (CDRSCTGVMGHPSCATCCACFTSAGKR).

As to expression, expressed by the venom duct.

It localises to the secreted. Functionally, probable neurotoxin. The protein is Conotoxin Im23.5 of Conus imperialis (Imperial cone).